A 376-amino-acid chain; its full sequence is Alkanesulfonate monooxygenase (376 aa).

Belongs to the SsuD family.

It catalyses the reaction an alkanesulfonate + FMNH2 + O2 = an aldehyde + FMN + sulfite + H2O + 2 H(+). Its function is as follows. Catalyzes the desulfonation of aliphatic sulfonates. In Bacillus licheniformis (strain ATCC 14580 / DSM 13 / JCM 2505 / CCUG 7422 / NBRC 12200 / NCIMB 9375 / NCTC 10341 / NRRL NRS-1264 / Gibson 46), this protein is Alkanesulfonate monooxygenase.